Reading from the N-terminus, the 189-residue chain is GMP synthase [glutamine-hydrolyzing] subunit A (189 aa).

In terms of domain architecture, Glutamine amidotransferase type-1 spans 1-189 (MIVILNNGGQ…CKKCGFEFEE (189 aa)). Residue cysteine 76 is the Nucleophile of the active site. Active-site residues include histidine 163 and glutamate 165.

Heterodimer composed of a glutamine amidotransferase subunit (A) and a GMP-binding subunit (B).

It catalyses the reaction XMP + L-glutamine + ATP + H2O = GMP + L-glutamate + AMP + diphosphate + 2 H(+). The protein operates within purine metabolism; GMP biosynthesis; GMP from XMP (L-Gln route): step 1/1. Catalyzes the synthesis of GMP from XMP. In Methanococcus maripaludis (strain C5 / ATCC BAA-1333), this protein is GMP synthase [glutamine-hydrolyzing] subunit A.